We begin with the raw amino-acid sequence, 165 residues long: Thiol peroxidase (165 aa).

Positions 18 to 164 constitute a Thioredoxin domain; it reads RKVGDKAPNF…YEAAIEAAKK (147 aa). The Cysteine sulfenic acid (-SOH) intermediate role is filled by cysteine 60. A disulfide bridge links cysteine 60 with cysteine 94.

This sequence belongs to the peroxiredoxin family. Tpx subfamily. In terms of assembly, homodimer.

The enzyme catalyses a hydroperoxide + [thioredoxin]-dithiol = an alcohol + [thioredoxin]-disulfide + H2O. Thiol-specific peroxidase that catalyzes the reduction of hydrogen peroxide and organic hydroperoxides to water and alcohols, respectively. Plays a role in cell protection against oxidative stress by detoxifying peroxides. The polypeptide is Thiol peroxidase (Listeria monocytogenes serovar 1/2a (strain ATCC BAA-679 / EGD-e)).